A 1220-amino-acid chain; its full sequence is ATP-dependent helicase/nuclease subunit A (1220 aa).

Residues 9–473 form the UvrD-like helicase ATP-binding domain; the sequence is VIWTDDQWKS…IDLSQNFRSR (465 aa). 30–37 contacts ATP; it reads AAAGSGKT. The UvrD-like helicase C-terminal domain maps to 474–782; sequence PEVLSTTNYL…RMMTIHASKG (309 aa).

This sequence belongs to the helicase family. AddA subfamily. In terms of assembly, heterodimer of AddA and AddB/RexB. Mg(2+) serves as cofactor.

The catalysed reaction is Couples ATP hydrolysis with the unwinding of duplex DNA by translocating in the 3'-5' direction.. The enzyme catalyses ATP + H2O = ADP + phosphate + H(+). The heterodimer acts as both an ATP-dependent DNA helicase and an ATP-dependent, dual-direction single-stranded exonuclease. Recognizes the chi site generating a DNA molecule suitable for the initiation of homologous recombination. The AddA nuclease domain is required for chi fragment generation; this subunit has the helicase and 3' -&gt; 5' nuclease activities. The chain is ATP-dependent helicase/nuclease subunit A from Staphylococcus carnosus (strain TM300).